A 115-amino-acid chain; its full sequence is U3-lycotoxin-Ls1a (115 aa).

The first 20 residues, 1–20 (MKFVLLFGVFLVTLFSYSSA), serve as a signal peptide directing secretion. The propeptide occupies 21-44 (EMLDDFDQAAEDELLSLIEKEEAR). Disulfide bonds link Cys48–Cys63, Cys55–Cys72, Cys62–Cys87, and Cys74–Cys85.

It belongs to the neurotoxin 19 (CSTX) family. 01 subfamily. In terms of tissue distribution, expressed by the venom gland.

It is found in the secreted. This chain is U3-lycotoxin-Ls1a, found in Lycosa singoriensis (Wolf spider).